The primary structure comprises 272 residues: Acyl-[acyl-carrier-protein]--UDP-N-acetylglucosamine O-acyltransferase (272 aa).

Belongs to the transferase hexapeptide repeat family. LpxA subfamily. Homotrimer.

Its subcellular location is the cytoplasm. The catalysed reaction is a (3R)-hydroxyacyl-[ACP] + UDP-N-acetyl-alpha-D-glucosamine = a UDP-3-O-[(3R)-3-hydroxyacyl]-N-acetyl-alpha-D-glucosamine + holo-[ACP]. It functions in the pathway glycolipid biosynthesis; lipid IV(A) biosynthesis; lipid IV(A) from (3R)-3-hydroxytetradecanoyl-[acyl-carrier-protein] and UDP-N-acetyl-alpha-D-glucosamine: step 1/6. In terms of biological role, involved in the biosynthesis of lipid A, a phosphorylated glycolipid that anchors the lipopolysaccharide to the outer membrane of the cell. The sequence is that of Acyl-[acyl-carrier-protein]--UDP-N-acetylglucosamine O-acyltransferase from Rhizobium leguminosarum bv. trifolii (strain WSM2304).